The sequence spans 188 residues: dCTP deaminase (188 aa).

Residues 111-116, 135-137, glutamine 156, tyrosine 170, and glutamine 180 each bind dCTP; these read KSTYAR and TLE. The active-site Proton donor/acceptor is glutamate 137.

It belongs to the dCTP deaminase family. Homotrimer.

The enzyme catalyses dCTP + H2O + H(+) = dUTP + NH4(+). Its pathway is pyrimidine metabolism; dUMP biosynthesis; dUMP from dCTP (dUTP route): step 1/2. Its function is as follows. Catalyzes the deamination of dCTP to dUTP. The chain is dCTP deaminase from Pseudomonas fluorescens (strain SBW25).